A 479-amino-acid chain; its full sequence is Ribosomal RNA small subunit methyltransferase F (479 aa).

Residues 125–131 (AAAPGSK), E149, D176, and D194 contribute to the S-adenosyl-L-methionine site. The active-site Nucleophile is C247.

This sequence belongs to the class I-like SAM-binding methyltransferase superfamily. RsmB/NOP family.

It is found in the cytoplasm. The enzyme catalyses cytidine(1407) in 16S rRNA + S-adenosyl-L-methionine = 5-methylcytidine(1407) in 16S rRNA + S-adenosyl-L-homocysteine + H(+). Specifically methylates the cytosine at position 1407 (m5C1407) of 16S rRNA. The sequence is that of Ribosomal RNA small subunit methyltransferase F from Escherichia coli O7:K1 (strain IAI39 / ExPEC).